We begin with the raw amino-acid sequence, 119 residues long: Large ribosomal subunit protein bL20 (119 aa).

It belongs to the bacterial ribosomal protein bL20 family.

In terms of biological role, binds directly to 23S ribosomal RNA and is necessary for the in vitro assembly process of the 50S ribosomal subunit. It is not involved in the protein synthesizing functions of that subunit. The protein is Large ribosomal subunit protein bL20 of Teredinibacter turnerae (strain ATCC 39867 / T7901).